The sequence spans 580 residues: Serine/threonine-protein kinase PINK1, mitochondrial (580 aa).

A mitochondrion-targeting transit peptide spans 1–77 (MAVRQALGRG…RFFRQSVAGL (77 aa)). The Mitochondrial intermembrane portion of the chain corresponds to 78–93 (AARIQRQFMVRARGGA). A helical membrane pass occupies residues 94 to 110 (GPCGRAVFLAFGLGLGL). Positions 111–117 (IEEKQAE) are required for outer membrane localization. The Cytoplasmic portion of the chain corresponds to 111-580 (IEEKQAEGRR…LLLSSWRAAP (470 aa)). Residues 156–510 (YLIGQAIGKG…LAANVLHLSL (355 aa)) form the Protein kinase domain. ATP is bound by residues 162–170 (IGKGCNAAV) and K186. Phosphoserine; by autocatalysis is present on S227. Residue D361 is the Proton acceptor of the active site. The residue at position 401 (S401) is a Phosphoserine; by autocatalysis.

This sequence belongs to the protein kinase superfamily. Ser/Thr protein kinase family. As to quaternary structure, upon mitochondrial depolarization, it forms a supercomplex with TOM and TIM23 complexes. PINK1-TOM-TIM23 supercomplex formation requires PINK1 interaction with TOMM20 and TOMM70 and is critical for PINK1 stabilization at the outer mitochondrial membrane, kinase activation and downstream mitophagy. Upon mitochondrial depolarization, interacts with TIMM23; the interaction is required for PINK1 accumulation at the outer mitochondrial membrane, kinase activation by autophosphorylation and PRKN recruitement to mitochondria. Interacts with PRKN. Interacts with FBXO7. Forms a complex with PRKN and PARK7. Interacts with NENF. Mg(2+) is required as a cofactor. Proteolytically cleaved. In healthy cells, the precursor is continuously imported into the inner mitochondrial membrane (IMM), where it is proteolytically cleaved by mitochondrial-processing peptidase (MPP) and then undergoes further proteolytic cleavage by PARL or AFG3L2 to give rise to the 52 kDa short form. The 52 kDa short form is then released into the cytosol where it rapidly undergoes proteasome-dependent degradation. In unhealthy cells, when cellular stress conditions lead to the loss of mitochondrial membrane potential, mitochondrial import is impaired leading to the precursor accumulating on the outer mitochondrial membrane (OMM). If accumulation at the OMM fails and it is imported into the depolarized mitochondria, it undergoes cleavage by the IMM protease OMA1, promoting its subsequent degradation by the proteasome. In terms of processing, autophosphorylated. Loss of mitochondrial membrane potential results in the precursor accumulating on the outer mitochondrial membrane (OMM) where it is activated by autophosphorylation. Autophosphorylation at Ser-227 and Ser-401 is essential for selective recruitment of PRKN to depolarized mitochondria, via PINK1-dependent phosphorylation of ubiquitin and PRKN. High levels expressed in testis, lower levels in brain, heart, lung, liver and kidney.

It localises to the mitochondrion outer membrane. The protein localises to the mitochondrion inner membrane. It is found in the cytoplasm. The protein resides in the cytosol. It carries out the reaction L-seryl-[protein] + ATP = O-phospho-L-seryl-[protein] + ADP + H(+). The enzyme catalyses L-threonyl-[protein] + ATP = O-phospho-L-threonyl-[protein] + ADP + H(+). Functionally, serine/threonine-protein kinase which acts as a sensor of mitochondrial damage and protects against mitochondrial dysfunction during cellular stress. It phosphorylates mitochondrial proteins to coordinate mitochondrial quality control mechanisms that remove and replace dysfunctional mitochondrial components. Depending on the severity of mitochondrial damage, activity ranges from preventing apoptosis and stimulating mitochondrial biogenesis to eliminating severely damaged mitochondria via PINK1-PRKN-dependent mitophagy. When cellular stress results in irreversible mitochondrial damage, PINK1 accumulates at the outer mitochondrial membrane (OMM) where it phosphorylates pre-existing polyubiquitin chains at 'Ser-65', recruits PRKN from the cytosol to the OMM and activates PRKN by phosphorylation at 'Ser-65'. Activated PRKN then ubiquinates VDAC1 and other OMM proteins to initiate mitophagy. The PINK1-PRKN pathway also promotes fission of damaged mitochondria by phosphorylating and thus promoting the PRKN-dependent degradation of mitochondrial proteins involved in fission such as MFN2. This prevents the refusion of unhealthy mitochondria with the mitochondrial network or initiates mitochondrial fragmentation facilitating their later engulfment by autophagosomes. Also promotes mitochondrial fission independently of PRKN and ATG7-mediated mitophagy, via the phosphorylation and activation of DNM1L. Regulates motility of damaged mitochondria by promoting the ubiquitination and subsequent degradation of MIRO1 and MIRO2; in motor neurons, this likely inhibits mitochondrial intracellular anterograde transport along the axons which probably increases the chance of the mitochondria undergoing mitophagy in the soma. Required for ubiquinone reduction by mitochondrial complex I by mediating phosphorylation of complex I subunit NDUFA10. Phosphorylates LETM1, positively regulating its mitochondrial calcium transport activity. This Mus musculus (Mouse) protein is Serine/threonine-protein kinase PINK1, mitochondrial (Pink1).